Here is a 305-residue protein sequence, read N- to C-terminus: Glycine--tRNA ligase alpha subunit (305 aa).

It belongs to the class-II aminoacyl-tRNA synthetase family. Tetramer of two alpha and two beta subunits.

It is found in the cytoplasm. The enzyme catalyses tRNA(Gly) + glycine + ATP = glycyl-tRNA(Gly) + AMP + diphosphate. This Streptococcus pneumoniae (strain Hungary19A-6) protein is Glycine--tRNA ligase alpha subunit.